We begin with the raw amino-acid sequence, 207 residues long: Interleukin-6 (207 aa).

An N-terminal signal peptide occupies residues 1 to 20 (MNSLSTSAFSLGLLLVMATA). C67 and C73 are disulfide-bonded. Position 76 is a phosphoserine (S76). The cysteines at positions 96 and 106 are disulfide-linked.

The protein belongs to the IL-6 superfamily. As to quaternary structure, component of a hexamer of two molecules each of IL6, IL6R and IL6ST; first binds to IL6R to associate with the signaling subunit IL6ST. Interacts with IL6R (via the N-terminal ectodomain); this interaction may be affected by IL6R-binding with SORL1, hence decreasing IL6 cis signaling. Interacts with SORL1 (via the N-terminal ectodomain); this interaction leads to IL6 internalization and lysosomal degradation. May form a trimeric complex with the soluble SORL1 ectodomain and soluble IL6R receptor; this interaction might stabilize circulating IL6, hence promoting IL6 trans signaling.

The protein localises to the secreted. Functionally, cytokine with a wide variety of biological functions in immunity, tissue regeneration, and metabolism. Binds to IL6R, then the complex associates to the signaling subunit IL6ST/gp130 to trigger the intracellular IL6-signaling pathway. The interaction with the membrane-bound IL6R and IL6ST stimulates 'classic signaling', whereas the binding of IL6 and soluble IL6R to IL6ST stimulates 'trans-signaling'. Alternatively, 'cluster signaling' occurs when membrane-bound IL6:IL6R complexes on transmitter cells activate IL6ST receptors on neighboring receiver cells. IL6 is a potent inducer of the acute phase response. Rapid production of IL6 contributes to host defense during infection and tissue injury, but excessive IL6 synthesis is involved in disease pathology. In the innate immune response, is synthesized by myeloid cells, such as macrophages and dendritic cells, upon recognition of pathogens through toll-like receptors (TLRs) at the site of infection or tissue injury. In the adaptive immune response, is required for the differentiation of B cells into immunoglobulin-secreting cells. Plays a major role in the differentiation of CD4(+) T cell subsets. Essential factor for the development of T follicular helper (Tfh) cells that are required for the induction of germinal-center formation. Required to drive naive CD4(+) T cells to the Th17 lineage. Also required for proliferation of myeloma cells and the survival of plasmablast cells. In terms of biological role, acts as an essential factor in bone homeostasis and on vessels directly or indirectly by induction of VEGF, resulting in increased angiogenesis activity and vascular permeability. Induces, through 'trans-signaling' and synergistically with IL1B and TNF, the production of VEGF. Involved in metabolic controls, is discharged into the bloodstream after muscle contraction increasing lipolysis and improving insulin resistance. 'Trans-signaling' in central nervous system also regulates energy and glucose homeostasis. Mediates, through GLP-1, crosstalk between insulin-sensitive tissues, intestinal L cells and pancreatic islets to adapt to changes in insulin demand. Also acts as a myokine. Plays a protective role during liver injury, being required for maintenance of tissue regeneration. Also has a pivotal role in iron metabolism by regulating HAMP/hepcidin expression upon inflammation or bacterial infection. Through activation of IL6ST-YAP-NOTCH pathway, induces inflammation-induced epithelial regeneration. In Canis lupus familiaris (Dog), this protein is Interleukin-6 (IL6).